A 216-amino-acid chain; its full sequence is Ribosomal RNA large subunit methyltransferase E (216 aa).

S-adenosyl-L-methionine contacts are provided by Gly-71, Trp-73, Asp-88, Asp-104, and Asp-126. Catalysis depends on Lys-166, which acts as the Proton acceptor.

The protein belongs to the class I-like SAM-binding methyltransferase superfamily. RNA methyltransferase RlmE family.

The protein localises to the cytoplasm. The catalysed reaction is uridine(2552) in 23S rRNA + S-adenosyl-L-methionine = 2'-O-methyluridine(2552) in 23S rRNA + S-adenosyl-L-homocysteine + H(+). Functionally, specifically methylates the uridine in position 2552 of 23S rRNA at the 2'-O position of the ribose in the fully assembled 50S ribosomal subunit. The chain is Ribosomal RNA large subunit methyltransferase E from Wolbachia sp. subsp. Brugia malayi (strain TRS).